Here is a 311-residue protein sequence, read N- to C-terminus: MQEIQKNTKKEQYNLNKLQKRLRRNVGEAIADFNMIEEGDRIMVCLSGGKDSYTMLEILRNLQQSAPINFSLVAVNLDQKQPGFPEHILPAYLEPLGVEYKIVEENTYGIVKEKIPEGKTTCSLCSRLRRGILYRTATELGATKIALGHHRDDILQTLFLNMFYGGKMKGMPPKLMSDDGKHIVIRPLAYCREKDIVRFAEAKAFPIIPCNLCGSQPNLQRQVIADMLRDWDKRYPGRIETMFSAMQNVVPSHLCDTNLFDFKGITHGSEVVDGGDLAFDREEIPLQPAGWQPEEDDTSLEALRLDVIEVK.

Positions 47–52 (SGGKDS) match the PP-loop motif motif. The [4Fe-4S] cluster site is built by C122, C125, and C213.

It belongs to the TtcA family. Homodimer. It depends on Mg(2+) as a cofactor. The cofactor is [4Fe-4S] cluster.

Its subcellular location is the cytoplasm. It carries out the reaction cytidine(32) in tRNA + S-sulfanyl-L-cysteinyl-[cysteine desulfurase] + AH2 + ATP = 2-thiocytidine(32) in tRNA + L-cysteinyl-[cysteine desulfurase] + A + AMP + diphosphate + H(+). It participates in tRNA modification. Its function is as follows. Catalyzes the ATP-dependent 2-thiolation of cytidine in position 32 of tRNA, to form 2-thiocytidine (s(2)C32). The sulfur atoms are provided by the cysteine/cysteine desulfurase (IscS) system. The polypeptide is tRNA-cytidine(32) 2-sulfurtransferase (Salmonella choleraesuis (strain SC-B67)).